The sequence spans 297 residues: Bifunctional protein FolD 2 (297 aa).

NADP(+) contacts are provided by residues 164 to 166, S193, and I234; that span reads GRS.

It belongs to the tetrahydrofolate dehydrogenase/cyclohydrolase family. Homodimer.

The enzyme catalyses (6R)-5,10-methylene-5,6,7,8-tetrahydrofolate + NADP(+) = (6R)-5,10-methenyltetrahydrofolate + NADPH. The catalysed reaction is (6R)-5,10-methenyltetrahydrofolate + H2O = (6R)-10-formyltetrahydrofolate + H(+). Its pathway is one-carbon metabolism; tetrahydrofolate interconversion. Its function is as follows. Catalyzes the oxidation of 5,10-methylenetetrahydrofolate to 5,10-methenyltetrahydrofolate and then the hydrolysis of 5,10-methenyltetrahydrofolate to 10-formyltetrahydrofolate. The chain is Bifunctional protein FolD 2 from Haloarcula marismortui (strain ATCC 43049 / DSM 3752 / JCM 8966 / VKM B-1809) (Halobacterium marismortui).